We begin with the raw amino-acid sequence, 444 residues long: UDP-N-acetylmuramate--L-alanine ligase (444 aa).

An ATP-binding site is contributed by 110-116 (GAHGKTS).

The protein belongs to the MurCDEF family.

It is found in the cytoplasm. The enzyme catalyses UDP-N-acetyl-alpha-D-muramate + L-alanine + ATP = UDP-N-acetyl-alpha-D-muramoyl-L-alanine + ADP + phosphate + H(+). It participates in cell wall biogenesis; peptidoglycan biosynthesis. In terms of biological role, cell wall formation. This chain is UDP-N-acetylmuramate--L-alanine ligase, found in Streptococcus sanguinis (strain SK36).